The primary structure comprises 277 residues: Putative protease slr0021 (277 aa).

Residue S85 is the Nucleophile of the active site. K137 (proton donor/acceptor) is an active-site residue.

Belongs to the peptidase S49 family.

This is Putative protease slr0021 from Synechocystis sp. (strain ATCC 27184 / PCC 6803 / Kazusa).